Reading from the N-terminus, the 72-residue chain is DNA-directed RNA polymerase subunit omega (72 aa).

It belongs to the RNA polymerase subunit omega family. The RNAP catalytic core consists of 2 alpha, 1 beta, 1 beta' and 1 omega subunit. When a sigma factor is associated with the core the holoenzyme is formed, which can initiate transcription.

It catalyses the reaction RNA(n) + a ribonucleoside 5'-triphosphate = RNA(n+1) + diphosphate. Promotes RNA polymerase assembly. Latches the N- and C-terminal regions of the beta' subunit thereby facilitating its interaction with the beta and alpha subunits. The protein is DNA-directed RNA polymerase subunit omega of Francisella tularensis subsp. tularensis (strain FSC 198).